A 317-amino-acid chain; its full sequence is Xylose/arabinose import permease protein XacH (317 aa).

The next 6 membrane-spanning stretches (helical) occupy residues 40-60, 98-118, 132-152, 179-199, 241-261, and 290-310; these read GIPF…NFAI, LVLL…LAIL, VYLL…LWMF, IALG…TMVV, AAVV…ALVG, and AAIA…YLYY. The 216-residue stretch at 94-309 folds into the ABC transmembrane type-1 domain; the sequence is AQNNLVLLVG…ALGVIGPYLY (216 aa).

This sequence belongs to the binding-protein-dependent transport system permease family. As to quaternary structure, the complex is composed of two ATP-binding proteins (XacJ and XacK), two transmembrane proteins (XacH and XacI) and a solute-binding protein (XacG).

Its subcellular location is the cell membrane. Functionally, part of the ABC transporter complex XacGHIJK involved in the uptake of xylose and arabinose. Responsible for the translocation of the substrate across the membrane. In Haloferax volcanii (strain ATCC 29605 / DSM 3757 / JCM 8879 / NBRC 14742 / NCIMB 2012 / VKM B-1768 / DS2) (Halobacterium volcanii), this protein is Xylose/arabinose import permease protein XacH.